The sequence spans 272 residues: Golgi to ER traffic protein 5 (272 aa).

2 disordered regions span residues 1-35 and 85-105; these read MSTV…HSGT and LHAP…PGSS. The Ubiquitin-like domain occupies 108-198; the sequence is ITVHLKSARN…VEFGVMIIGG (91 aa). Residues 212 to 231 form a disordered region; sequence SAEQKESYEPPKPAVGPSGE.

This sequence belongs to the GET5 family. In terms of assembly, forms homodimers via its C-terminal domain. Component of the get4/get5/sgt2 sorting complex. Binds directly sgt12 homodimers.

It is found in the cytoplasm. In terms of biological role, component of the get4/get5/sgt2 sorting complex involved in the GET (guided entry of TA proteins) pathway that leads to the insertion of tail-anchored (TA) proteins into the endoplasmic reticulum. Get4 and get5 form an obligate complex that catalyzes the transfer of tail-anchored proteins destined to the endoplasmic reticulum from sgt2 to the cytosolic targeting factor which then targets the TA protein to the ER membrane via get1/get2. The sequence is that of Golgi to ER traffic protein 5 from Aspergillus fumigatus (strain ATCC MYA-4609 / CBS 101355 / FGSC A1100 / Af293) (Neosartorya fumigata).